The chain runs to 418 residues: Pentatricopeptide repeat-containing protein At2g18520, mitochondrial (418 aa).

The transit peptide at 1 to 14 (MTSSRLYLRFLRRF) directs the protein to the mitochondrion. PPR repeat units follow at residues 101 to 135 (TETFLSTLIRSYGRASMFDHAMKMFEEMDKLGTPR), 136 to 166 (TVVSFNALLAACLHSDLFERVPQLFDEFPQR), 173 to 207 (DKISYGMLIKSYCDSGKPEKAMEIMRDMEVKGVEV), 208 to 242 (TIIAFTTILGSLYKNGLVDEAESLWIEMVNKGCDL), 243 to 276 (DNTVYNVRLMNAAKESPERVKELMEEMSSVGLKP), 277 to 311 (DTVSYNYLMTAYCVKGMMSEAKKVYEGLEQPNAAT), 312 to 342 (FRTLIFHLCINGLYDQGLTVFKKSAIVHKIP), and 343 to 373 (DFKTCKHLTEGLVKNNRMEDARGVARIVKKK).

This sequence belongs to the PPR family. P subfamily.

The protein resides in the mitochondrion. The sequence is that of Pentatricopeptide repeat-containing protein At2g18520, mitochondrial from Arabidopsis thaliana (Mouse-ear cress).